A 145-amino-acid chain; its full sequence is I-leader protein (145 aa).

This sequence belongs to the adenoviridae leader protein family.

It is found in the host cytoplasm. Its subcellular location is the host perinuclear region. This is I-leader protein from Human adenovirus C serotype 5 (HAdV-5).